The primary structure comprises 1040 residues: Multidrug resistance protein MdtB (1040 aa).

The next 12 helical transmembrane spans lie at 25–45 (LLMA…PVAA), 347–367 (LMLA…NIPA), 369–389 (IIPG…MVFL), 396–416 (LTLM…IVVI), 440–460 (IGFT…PLLF), 472–492 (FAVT…TLTP), 537–557 (WLTL…WIVI), 863–883 (LGST…VLGV), 888–908 (FIHP…ALLA), 910–930 (IIAG…LIGI), 968–988 (ILMT…STGV), and 998–1018 (IAMV…TPVI).

This sequence belongs to the resistance-nodulation-cell division (RND) (TC 2.A.6) family. MdtB subfamily. In terms of assembly, part of a tripartite efflux system composed of MdtA, MdtB and MdtC. MdtB forms a heteromultimer with MdtC.

It localises to the cell inner membrane. This is Multidrug resistance protein MdtB from Salmonella dublin (strain CT_02021853).